Reading from the N-terminus, the 1438-residue chain is DNA-directed RNA polymerase subunit beta' (1438 aa).

Zn(2+) contacts are provided by cysteine 72, cysteine 74, cysteine 87, and cysteine 90. Aspartate 483, aspartate 485, and aspartate 487 together coordinate Mg(2+). Cysteine 831, cysteine 905, cysteine 912, and cysteine 915 together coordinate Zn(2+).

Belongs to the RNA polymerase beta' chain family. As to quaternary structure, the RNAP catalytic core consists of 2 alpha, 1 beta, 1 beta' and 1 omega subunit. When a sigma factor is associated with the core the holoenzyme is formed, which can initiate transcription. Mg(2+) is required as a cofactor. Zn(2+) serves as cofactor.

The enzyme catalyses RNA(n) + a ribonucleoside 5'-triphosphate = RNA(n+1) + diphosphate. Its function is as follows. DNA-dependent RNA polymerase catalyzes the transcription of DNA into RNA using the four ribonucleoside triphosphates as substrates. The sequence is that of DNA-directed RNA polymerase subunit beta' from Flavobacterium psychrophilum (strain ATCC 49511 / DSM 21280 / CIP 103535 / JIP02/86).